We begin with the raw amino-acid sequence, 128 residues long: MSDFEVPPKAKGFKRLFKALFYSKDGLKCAWIEESAFRQIVILALFCIVLASYLAKDFLEWGLLILPCFLSVVVELINSSIEKAVDFTGTEFHPLAKKAKDMASAAQLIGLIFWTLIWGRYLLALYLK.

Residue Glu-34 coordinates a divalent metal cation. A run of 2 helical transmembrane segments spans residues 35 to 55 (SAFRQIVILALFCIVLASYLA) and 58 to 78 (FLEWGLLILPCFLSVVVELIN). Glu-75 acts as the Proton acceptor in catalysis. Glu-82 provides a ligand contact to a divalent metal cation. Residues 107-127 (QLIGLIFWTLIWGRYLLALYL) form a helical membrane-spanning segment.

The protein belongs to the bacterial diacylglycerol kinase family. The cofactor is Mg(2+).

The protein resides in the cell inner membrane. It carries out the reaction a 1,2-diacyl-sn-glycerol + ATP = a 1,2-diacyl-sn-glycero-3-phosphate + ADP + H(+). In terms of biological role, catalyzes the ATP-dependent phosphorylation of sn-l,2-diacylglycerol (DAG) to phosphatidic acid. Involved in the recycling of diacylglycerol produced as a by-product during membrane-derived oligosaccharide (MDO) biosynthesis. The chain is Diacylglycerol kinase (dgkA) from Helicobacter pylori (strain ATCC 700392 / 26695) (Campylobacter pylori).